Reading from the N-terminus, the 43-residue chain is uncharacterized protein (43 aa).

The span at 1–37 (MIIKNNNNNNNNNNNNNNNNNNNNNNNNNNNNNNNNN) shows a compositional bias: low complexity. The segment at 1–43 (MIIKNNNNNNNNNNNNNNNNNNNNNNNNNNNNNNNNNIEIIIK) is disordered.

This is an uncharacterized protein from Dictyostelium discoideum (Social amoeba).